The sequence spans 545 residues: Chaperonin GroEL 2 (545 aa).

ATP is bound by residues 29-32 (TLGP), 86-90 (DGTTT), glycine 413, 479-481 (NAA), and aspartate 495.

The protein belongs to the chaperonin (HSP60) family. As to quaternary structure, forms a cylinder of 14 subunits composed of two heptameric rings stacked back-to-back. Interacts with the co-chaperonin GroES.

It is found in the cytoplasm. It carries out the reaction ATP + H2O + a folded polypeptide = ADP + phosphate + an unfolded polypeptide.. In terms of biological role, together with its co-chaperonin GroES, plays an essential role in assisting protein folding. The GroEL-GroES system forms a nano-cage that allows encapsulation of the non-native substrate proteins and provides a physical environment optimized to promote and accelerate protein folding. The protein is Chaperonin GroEL 2 of Prochlorococcus marinus (strain MIT 9301).